We begin with the raw amino-acid sequence, 99 residues long: NADH-quinone oxidoreductase subunit K (99 aa).

3 consecutive transmembrane segments (helical) span residues 3 to 23 (PENYLYLSVLLFTIGAAGVLL), 28 to 48 (IVVFMCIELMLNAANLAFVTF), and 62 to 82 (FFTMVVAAAEVVVGLAIIMII).

It belongs to the complex I subunit 4L family. As to quaternary structure, NDH-1 is composed of 14 different subunits. Subunits NuoA, H, J, K, L, M, N constitute the membrane sector of the complex.

It is found in the cell membrane. It catalyses the reaction a quinone + NADH + 5 H(+)(in) = a quinol + NAD(+) + 4 H(+)(out). Functionally, NDH-1 shuttles electrons from NADH, via FMN and iron-sulfur (Fe-S) centers, to quinones in the respiratory chain. The immediate electron acceptor for the enzyme in this species is believed to be a menaquinone. Couples the redox reaction to proton translocation (for every two electrons transferred, four hydrogen ions are translocated across the cytoplasmic membrane), and thus conserves the redox energy in a proton gradient. The sequence is that of NADH-quinone oxidoreductase subunit K from Rhodococcus erythropolis (strain PR4 / NBRC 100887).